A 147-amino-acid polypeptide reads, in one-letter code: Phosphoribosyl-AMP cyclohydrolase (147 aa).

Aspartate 91 serves as a coordination point for Mg(2+). Residue cysteine 92 coordinates Zn(2+). Mg(2+) contacts are provided by aspartate 93 and aspartate 95. Positions 108 and 115 each coordinate Zn(2+).

It belongs to the PRA-CH family. In terms of assembly, homodimer. The cofactor is Mg(2+). Requires Zn(2+) as cofactor.

Its subcellular location is the cytoplasm. It carries out the reaction 1-(5-phospho-beta-D-ribosyl)-5'-AMP + H2O = 1-(5-phospho-beta-D-ribosyl)-5-[(5-phospho-beta-D-ribosylamino)methylideneamino]imidazole-4-carboxamide. The protein operates within amino-acid biosynthesis; L-histidine biosynthesis; L-histidine from 5-phospho-alpha-D-ribose 1-diphosphate: step 3/9. Functionally, catalyzes the hydrolysis of the adenine ring of phosphoribosyl-AMP. The chain is Phosphoribosyl-AMP cyclohydrolase from Rhodopseudomonas palustris (strain BisB5).